Consider the following 317-residue polypeptide: Pectinesterase 31 (317 aa).

Substrate contacts are provided by T91 and Q121. D144 acts as the Proton donor in catalysis. Residue D165 is the Nucleophile of the active site. The substrate site is built by R222 and W224.

The protein belongs to the pectinesterase family. As to expression, expressed in siliques.

It carries out the reaction [(1-&gt;4)-alpha-D-galacturonosyl methyl ester](n) + n H2O = [(1-&gt;4)-alpha-D-galacturonosyl](n) + n methanol + n H(+). Its pathway is glycan metabolism; pectin degradation; 2-dehydro-3-deoxy-D-gluconate from pectin: step 1/5. With respect to regulation, does not require salt for activity. Not inhibited by kiwi pectin methylesterase inhibitor (PMEI). Acts in the modification of cell walls via demethylesterification of cell wall pectin. Acts in a blockwise manner, resulting in a cell wall rigidification. In Arabidopsis thaliana (Mouse-ear cress), this protein is Pectinesterase 31 (PME31).